Consider the following 115-residue polypeptide: Large ribosomal subunit protein bL19 (115 aa).

The protein belongs to the bacterial ribosomal protein bL19 family.

Its function is as follows. This protein is located at the 30S-50S ribosomal subunit interface and may play a role in the structure and function of the aminoacyl-tRNA binding site. This Streptococcus pyogenes serotype M1 protein is Large ribosomal subunit protein bL19.